Consider the following 218-residue polypeptide: Thiopurine S-methyltransferase (218 aa).

4 residues coordinate S-adenosyl-L-methionine: Trp-10, Leu-45, Glu-66, and Arg-123.

This sequence belongs to the class I-like SAM-binding methyltransferase superfamily. TPMT family.

Its subcellular location is the cytoplasm. It catalyses the reaction S-adenosyl-L-methionine + a thiopurine = S-adenosyl-L-homocysteine + a thiopurine S-methylether.. The protein is Thiopurine S-methyltransferase of Shewanella baltica (strain OS223).